Consider the following 652-residue polypeptide: Sodium-dependent phosphate transporter 1-A (652 aa).

Topologically, residues 1–25 (MESTTLASLAAVSVLAAGAQTDMSD) are cytoplasmic. The chain crosses the membrane as a helical span at residues 26–46 (VLWLLILGFVIAFILAFSVGA). The Extracellular segment spans residues 47–66 (NDVANSFGTAVGSGVVTLRQ). Residues 67 to 87 (ACILATIFETVGAMLLGAKVS) traverse the membrane as a helical segment. Topologically, residues 88–104 (ETIRSGIIDVHMYNGSE) are cytoplasmic. Residues 105–125 (AVLMAGSISAMFGSAVWQLAA) traverse the membrane as a helical segment. The Extracellular segment spans residues 126–162 (SFLKLPISGTHCIVGATIGFSMVARGHQGVKWLELLR). Residues 163-183 (IVASWFLSPLLSGIMSAVLFY) traverse the membrane as a helical segment. Over 184–201 (FVRKFILNKDDPVPNGLR) the chain is Cytoplasmic. The helical transmembrane segment at 202-222 (ALPVFYAVTMGINLFSIMFTG) threads the bilayer. The Extracellular segment spans residues 223-234 (APMLGFDRIPWW). A helical membrane pass occupies residues 235–255 (GTLLISLGCAILTALVVWFIV). The Cytoplasmic segment spans residues 256-482 (CPRLKKKMQS…IDELEIDKPE (227 aa)). Residues 278–308 (TQLVEKKPSSNGLMDHHPGPPRNYSPVPQTP) form a disordered region. Residues 281–295 (VEKKPSSNGLMDHHP) are compositionally biased toward basic and acidic residues. A compositionally biased stretch (pro residues) spans 297–308 (PPRNYSPVPQTP). Residues 483–503 (VSTLFQFLQILTACFGSFAHG) traverse the membrane as a helical segment. At 504–531 (GNDVSNAIGPLVALWLIYDSASVAPSAP) the chain is on the extracellular side. Residues 532–552 (TPIWLLLYGGVGICTGLWIWG) form a helical membrane-spanning segment. Over 553–571 (RRVIQTMGKDLTPITPSSG) the chain is Cytoplasmic. Residues 572-592 (FSIELASAITVVVASNIGLPV) traverse the membrane as a helical segment. At 593–621 (STTHCKVGSVVSVGWLRSRKAVDWHLFRN) the chain is on the extracellular side. The chain crosses the membrane as a helical span at residues 622–642 (IFIAWFVTVPISGLISAAIMA). The Cytoplasmic portion of the chain corresponds to 643–652 (LFYYVILPLT).

This sequence belongs to the inorganic phosphate transporter (PiT) (TC 2.A.20) family.

The protein localises to the membrane. Sodium-phosphate symporter which plays a fundamental housekeeping role in phosphate transport. This chain is Sodium-dependent phosphate transporter 1-A (slc20a1a), found in Danio rerio (Zebrafish).